Reading from the N-terminus, the 901-residue chain is Core protein VP3 (901 aa).

It belongs to the orbivirus VP3 family.

The protein resides in the virion. Functionally, the VP3 protein is one of the five proteins (with VP1, VP4, VP6 and VP7) which form the inner capsid of the virus. This is Core protein VP3 (Segment-3) from Bluetongue virus 11 (isolate USA) (BTV 11).